The sequence spans 93 residues: UPF0358 protein ABC2396 (93 aa).

Belongs to the UPF0358 family.

In Shouchella clausii (strain KSM-K16) (Alkalihalobacillus clausii), this protein is UPF0358 protein ABC2396.